The sequence spans 57 residues: Large ribosomal subunit protein bL32 (57 aa).

Positions 1 to 22 (MAVPKKKTSKAKRDQRRAHWRR) are enriched in basic residues. Residues 1–35 (MAVPKKKTSKAKRDQRRAHWRRQASSQAQKALSLG) form a disordered region.

It belongs to the bacterial ribosomal protein bL32 family.

The chain is Large ribosomal subunit protein bL32 (rpmF) from Synechocystis sp. (strain ATCC 27184 / PCC 6803 / Kazusa).